Reading from the N-terminus, the 434-residue chain is Homoserine dehydrogenase (434 aa).

Positions 13 and 14 each coordinate NADPH. NAD(+)-binding residues include Val-14, Ala-33, and Ala-43. Val-14 is an NADP(+) binding site. Residue Arg-45 coordinates NADPH. NADP(+) is bound by residues Arg-45, Arg-46, and Lys-103. Residue Lys-103 participates in NADPH binding. 4 residues coordinate Na(+): Glu-127, Val-130, Gly-132, and Ile-134. 2 residues coordinate NADP(+): Gly-185 and Glu-188. L-homoserine contacts are provided by Glu-188 and Asp-199. Lys-203 (proton donor) is an active-site residue. Gly-300 is a binding site for NADPH. NAD(+) is bound at residue Gly-300. An NADP(+)-binding site is contributed by Gly-300. One can recognise an ACT domain in the interval 353 to 429; the sequence is YLRIQAKDHP…GVSGPVVRIR (77 aa).

This sequence belongs to the homoserine dehydrogenase family. A metal cation is required as a cofactor.

It catalyses the reaction L-homoserine + NADP(+) = L-aspartate 4-semialdehyde + NADPH + H(+). It carries out the reaction L-homoserine + NAD(+) = L-aspartate 4-semialdehyde + NADH + H(+). It participates in amino-acid biosynthesis; L-methionine biosynthesis via de novo pathway; L-homoserine from L-aspartate: step 3/3. The protein operates within amino-acid biosynthesis; L-threonine biosynthesis; L-threonine from L-aspartate: step 3/5. Feedback inhibition by threonine. Functionally, catalyzes the conversion of L-aspartate-beta-semialdehyde (L-Asa) to L-homoserine (L-Hse), the third step in the biosynthesis of threonine and methionine from aspartate. This is Homoserine dehydrogenase (hom) from Pseudomonas aeruginosa (strain ATCC 15692 / DSM 22644 / CIP 104116 / JCM 14847 / LMG 12228 / 1C / PRS 101 / PAO1).